The chain runs to 607 residues: Aspartate--tRNA(Asp/Asn) ligase (607 aa).

L-aspartate is bound at residue Glu176. The segment at 200-203 (QQFK) is aspartate. L-aspartate is bound by residues Arg222 and His456. 222–224 (RDE) provides a ligand contact to ATP. Residue Glu496 coordinates ATP. Arg503 contacts L-aspartate. 548-551 (GIDR) is a binding site for ATP.

It belongs to the class-II aminoacyl-tRNA synthetase family. Type 1 subfamily. As to quaternary structure, homodimer.

The protein resides in the cytoplasm. The enzyme catalyses tRNA(Asx) + L-aspartate + ATP = L-aspartyl-tRNA(Asx) + AMP + diphosphate. Its function is as follows. Aspartyl-tRNA synthetase with relaxed tRNA specificity since it is able to aspartylate not only its cognate tRNA(Asp) but also tRNA(Asn). Reaction proceeds in two steps: L-aspartate is first activated by ATP to form Asp-AMP and then transferred to the acceptor end of tRNA(Asp/Asn). The protein is Aspartate--tRNA(Asp/Asn) ligase of Parvibaculum lavamentivorans (strain DS-1 / DSM 13023 / NCIMB 13966).